Reading from the N-terminus, the 343-residue chain is 3-keto-steroid reductase (343 aa).

NADP(+) is bound by residues leucine 19 and threonine 42. Residues serine 180 and tyrosine 203 each act as proton donor in the active site. Residues tyrosine 203, lysine 207, and serine 239 each coordinate NADP(+). Lysine 207 serves as the catalytic Lowers pKa of active site Tyr.

This sequence belongs to the short-chain dehydrogenases/reductases (SDR) family. ERG27 subfamily.

The enzyme catalyses a 3beta-hydroxysteroid + NADP(+) = a 3-oxosteroid + NADPH + H(+). It participates in steroid biosynthesis; zymosterol biosynthesis; zymosterol from lanosterol: step 5/6. Responsible for the reduction of the keto group on the C-3 of sterols. This Yarrowia lipolytica (strain CLIB 122 / E 150) (Yeast) protein is 3-keto-steroid reductase (ERG27).